The chain runs to 413 residues: Putative F-box/kelch-repeat protein At3g22870 (413 aa).

In terms of domain architecture, F-box spans 2–53 (TLTISDLPRDLKKKIFSRIPLRYVRALRLTCKEWETLIKSRSLKIDEEESQM). Kelch repeat units lie at residues 156–202 (LLRF…IGVS) and 331–379 (KVFI…RRRQ).

The sequence is that of Putative F-box/kelch-repeat protein At3g22870 from Arabidopsis thaliana (Mouse-ear cress).